The following is a 395-amino-acid chain: Homoserine O-acetyltransferase (395 aa).

The AB hydrolase-1 domain occupies 65-363 (PIVLIEHALT…SPTGHDGFLI (299 aa)). Catalysis depends on S160, which acts as the Nucleophile. Residue R230 participates in substrate binding. Active-site residues include D328 and H358. D359 contacts substrate.

Belongs to the AB hydrolase superfamily. MetX family. Homodimer.

The protein localises to the cytoplasm. The enzyme catalyses L-homoserine + acetyl-CoA = O-acetyl-L-homoserine + CoA. Its pathway is amino-acid biosynthesis; L-methionine biosynthesis via de novo pathway; O-acetyl-L-homoserine from L-homoserine: step 1/1. Transfers an acetyl group from acetyl-CoA to L-homoserine, forming acetyl-L-homoserine. This is Homoserine O-acetyltransferase from Corynebacterium jeikeium (strain K411).